Reading from the N-terminus, the 475-residue chain is Probable pectate lyase 7 (475 aa).

A signal peptide spans 1–24 (METARLFKLVCVICIASLIPTIRA). 2 N-linked (GlcNAc...) asparagine glycosylation sites follow: asparagine 67 and asparagine 96. A disordered region spans residues 91-117 (ISSPTNSTRRSLTGRGKGKGKGKWSKL). Positions 271, 295, and 299 each coordinate Ca(2+). Arginine 351 is an active-site residue.

Belongs to the polysaccharide lyase 1 family. It depends on Ca(2+) as a cofactor.

The enzyme catalyses Eliminative cleavage of (1-&gt;4)-alpha-D-galacturonan to give oligosaccharides with 4-deoxy-alpha-D-galact-4-enuronosyl groups at their non-reducing ends.. The protein operates within glycan metabolism; pectin degradation; 2-dehydro-3-deoxy-D-gluconate from pectin: step 2/5. This Arabidopsis thaliana (Mouse-ear cress) protein is Probable pectate lyase 7.